The following is a 108-amino-acid chain: UPF0060 membrane protein Nham_2004 (108 aa).

4 helical membrane-spanning segments follow: residues 5–25 (AAYV…WAWL), 31–51 (VWWL…LTLV), 61–81 (AAYG…VEGL), and 88–108 (LTGA…PRQI).

Belongs to the UPF0060 family.

Its subcellular location is the cell inner membrane. The sequence is that of UPF0060 membrane protein Nham_2004 from Nitrobacter hamburgensis (strain DSM 10229 / NCIMB 13809 / X14).